The chain runs to 171 residues: Probable chorismate pyruvate-lyase (171 aa).

Positions 36, 78, 116, and 157 each coordinate substrate.

The protein belongs to the UbiC family.

It localises to the cytoplasm. It catalyses the reaction chorismate = 4-hydroxybenzoate + pyruvate. It participates in cofactor biosynthesis; ubiquinone biosynthesis. Functionally, removes the pyruvyl group from chorismate, with concomitant aromatization of the ring, to provide 4-hydroxybenzoate (4HB) for the ubiquinone pathway. The chain is Probable chorismate pyruvate-lyase from Bartonella henselae (strain ATCC 49882 / DSM 28221 / CCUG 30454 / Houston 1) (Rochalimaea henselae).